A 546-amino-acid polypeptide reads, in one-letter code: Fusion glycoprotein F0 (546 aa).

Residues M1–G19 form the signal peptide. The Extracellular segment spans residues Q20–T491. 3 N-linked (GlcNAc...) asparagine; by host glycosylation sites follow: N25, N57, and N63. Residues F109–L133 are fusion peptide. The stretch at H134 to Q162 forms a coiled coil. Disulfide bonds link C354–C362, C386–C391, and C393–C416. The stretch at D458–I483 forms a coiled coil. The chain crosses the membrane as a helical span at residues G492 to C512. The Cytoplasmic segment spans residues C513–L546.

Belongs to the paramyxoviruses fusion glycoprotein family. Homotrimer of disulfide-linked F1-F2. Post-translationally, the inactive precursor F0 is glycosylated and proteolytically cleaved into F1 and F2 to be functionally active. The cleavage is mediated by cellular proteases during the transport and maturation of the polypeptide.

The protein resides in the virion membrane. Its subcellular location is the host cell membrane. In terms of biological role, class I viral fusion protein. Under the current model, the protein has at least 3 conformational states: pre-fusion native state, pre-hairpin intermediate state, and post-fusion hairpin state. During viral and plasma cell membrane fusion, the heptad repeat (HR) regions assume a trimer-of-hairpins structure, positioning the fusion peptide in close proximity to the C-terminal region of the ectodomain. The formation of this structure appears to drive apposition and subsequent fusion of viral and plasma cell membranes. Directs fusion of viral and cellular membranes leading to delivery of the nucleocapsid into the cytoplasm. This fusion is pH independent and occurs directly at the outer cell membrane. The trimer of F1-F2 (F protein) probably interacts with HN at the virion surface. Upon HN binding to its cellular receptor, the hydrophobic fusion peptide is unmasked and interacts with the cellular membrane, inducing the fusion between cell and virion membranes. Later in infection, F proteins expressed at the plasma membrane of infected cells could mediate fusion with adjacent cells to form syncytia, a cytopathic effect that could lead to tissue necrosis. The sequence is that of Fusion glycoprotein F0 (F) from Bos indicus (Zebu).